A 612-amino-acid polypeptide reads, in one-letter code: Proton pump-interactor 1 (612 aa).

The segment at 1-58 is disordered; sequence MGVEVVNSGGFEVAPAPFEGKPEKNGKLDQGKGDDAPINFGSVGELPKNAEENNNKVV. Positions 20 to 35 are enriched in basic and acidic residues; sequence GKPEKNGKLDQGKGDD. 2 coiled-coil regions span residues 90–113 and 251–314; these read PKIKAKLDLADKELEKLNKARTGV and LDGV…NSEY. 4 stretches are compositionally biased toward basic and acidic residues: residues 374 to 387, 434 to 446, 459 to 498, and 505 to 519; these read LSRDGRMRNPDEKP, EKAKDAVKVKNVA, PQKEEKPVDAATAKEMRKQEEIAKAKQAMERKKKLAEKAA, and AQKEAEKKEKKEQEK. Residues 374-572 form a disordered region; sequence LSRDGRMRNP…PIRNRTRGRG (199 aa). The stretch at 466–526 forms a coiled coil; that stretch reads VDAATAKEMR…QEKKAKKKTG (61 aa). A compositionally biased stretch (acidic residues) spans 531–545; sequence TETEEVPEASEEEIE. Ser540 carries the post-translational modification Phosphoserine. Residues 549-564 show a composition bias toward basic and acidic residues; the sequence is QEEKPQKEKVFKEKPI. The chain crosses the membrane as a helical span at residues 591 to 611; it reads VYAAPAALVVLLLLVLGYYYV.

It belongs to the plant Proton pump-interactor protein family. In terms of assembly, interacts with AHA1 via N-terminal region. As to expression, strongly expressed in root and shoot vascular systems, particularly in meristematic and sink tissues. Also present in pollen, stigmas and siliques, but not in developing embryos.

It localises to the cell membrane. The protein localises to the endoplasmic reticulum membrane. Promotes AHA1 plasma membrane ATPase activity by binding to a site different from the 14-3-3 binding site. The polypeptide is Proton pump-interactor 1 (PPI1) (Arabidopsis thaliana (Mouse-ear cress)).